A 234-amino-acid chain; its full sequence is Probable GTP-binding protein EngB (234 aa).

The region spanning 23–209 (AVPEVAFAGR…QRTVAGWLCL (187 aa)) is the EngB-type G domain. Residues 31 to 38 (GRSNAGKS), 58 to 62 (GRTQH), 82 to 85 (DLPG), 149 to 152 (TKAD), and 187 to 190 (LFSS) each bind GTP. Mg(2+) is bound by residues S38 and T60. A disordered region spans residues 210 to 234 (PEAMPPSPDAEPAKKTPSPDAQRGE).

Belongs to the TRAFAC class TrmE-Era-EngA-EngB-Septin-like GTPase superfamily. EngB GTPase family. The cofactor is Mg(2+).

Functionally, necessary for normal cell division and for the maintenance of normal septation. This chain is Probable GTP-binding protein EngB, found in Ralstonia nicotianae (strain ATCC BAA-1114 / GMI1000) (Ralstonia solanacearum).